The sequence spans 434 residues: ATP-dependent protease ATPase subunit HslU (434 aa).

ATP contacts are provided by residues I18, 60–65 (GVGKTE), D247, E312, and R384.

It belongs to the ClpX chaperone family. HslU subfamily. As to quaternary structure, a double ring-shaped homohexamer of HslV is capped on each side by a ring-shaped HslU homohexamer. The assembly of the HslU/HslV complex is dependent on binding of ATP.

It localises to the cytoplasm. Its function is as follows. ATPase subunit of a proteasome-like degradation complex; this subunit has chaperone activity. The binding of ATP and its subsequent hydrolysis by HslU are essential for unfolding of protein substrates subsequently hydrolyzed by HslV. HslU recognizes the N-terminal part of its protein substrates and unfolds these before they are guided to HslV for hydrolysis. The polypeptide is ATP-dependent protease ATPase subunit HslU (Sinorhizobium fredii (strain NBRC 101917 / NGR234)).